The primary structure comprises 235 residues: Large ribosomal subunit protein uL1 (235 aa).

It belongs to the universal ribosomal protein uL1 family. In terms of assembly, part of the 50S ribosomal subunit.

Its function is as follows. Binds directly to 23S rRNA. The L1 stalk is quite mobile in the ribosome, and is involved in E site tRNA release. Protein L1 is also a translational repressor protein, it controls the translation of the L11 operon by binding to its mRNA. The protein is Large ribosomal subunit protein uL1 of Nitratidesulfovibrio vulgaris (strain DSM 19637 / Miyazaki F) (Desulfovibrio vulgaris).